Here is a 1551-residue protein sequence, read N- to C-terminus: ABC-type transporter phomO (1551 aa).

Transmembrane regions (helical) follow at residues 34–54 (LYFE…LLAA), 110–130 (CTAG…CTTV), 139–159 (SVPA…LAHF), 172–192 (SSSL…APLV), 202–222 (GSAL…LIAV), 314–334 (LGLY…FTLA), and 358–378 (GLIG…GWYW). The ABC transmembrane type-1 1 domain maps to 326-599 (LCLAGFTLAQ…LLQIIPSFGA (274 aa)). N-linked (GlcNAc...) asparagine glycosylation is present at Asn384. Helical transmembrane passes span 428-448 (LAYA…TWML), 452-472 (VGPP…ASTY), 535-555 (LIVG…VLVF), and 577-597 (LIWI…IPSF). The 217-residue stretch at 645–861 (IHNSSFSYTD…VEDENGDVDN (217 aa)) folds into the ABC transporter 1 domain. Asn647 is a glycosylation site (N-linked (GlcNAc...) asparagine). Residue 678–685 (GPAGCGKS) coordinates ATP. N-linked (GlcNAc...) asparagine glycosylation is present at Asn721. The disordered stretch occupies residues 843–889 (YQFPPSQADVEDENGDVDNGAENTRPRESSHTTEAQSGPPEPKSKPT). 4 consecutive transmembrane segments (helical) span residues 903–923 (SIGF…AFCL), 959–979 (VLPL…IVPL), 1027–1044 (LFNT…VILI), and 1137–1157 (LVLN…AVGL). The 290-residue stretch at 910-1199 (VLFIGGGIIF…LLTAWTSLET (290 aa)) folds into the ABC transmembrane type-1 2 domain. A glycan (N-linked (GlcNAc...) asparagine) is linked at Asn1179. A compositionally biased stretch (basic and acidic residues) spans 1219-1228 (DVLVRPDSLD). The disordered stretch occupies residues 1219 to 1296 (DVLVRPDSLD…HEATTITTTS (78 aa)). The span at 1259 to 1270 (YDDDDESDENTD) shows a compositional bias: acidic residues. The ABC transporter 2 domain maps to 1287–1535 (HEATTITTTS…SDIFAFFGRS (249 aa)). Residue 1323 to 1330 (GRTGSGKS) coordinates ATP. N-linked (GlcNAc...) asparagine glycosylation is present at Asn1486.

This sequence belongs to the ABC transporter superfamily. ABCC family. Conjugate transporter (TC 3.A.1.208) subfamily.

It is found in the membrane. Functionally, ABC-type transporter; part of the gene cluster that mediates the biosynthesis of the phomopsins, a group of hexapeptide mycotoxins which infects lupins and causes lupinosis disease in livestock. This Diaporthe leptostromiformis (Lupinosis disease fungus) protein is ABC-type transporter phomO.